Reading from the N-terminus, the 452-residue chain is uncharacterized protein (452 aa).

This is an uncharacterized protein from Acanthamoeba polyphaga (Amoeba).